A 195-amino-acid chain; its full sequence is Molybdenum cofactor guanylyltransferase (195 aa).

GTP-binding positions include 10-12 (LAG), K23, N51, D69, and D99. D99 is a binding site for Mg(2+).

The protein belongs to the MobA family. As to quaternary structure, monomer. The cofactor is Mg(2+).

Its subcellular location is the cytoplasm. The catalysed reaction is Mo-molybdopterin + GTP + H(+) = Mo-molybdopterin guanine dinucleotide + diphosphate. Transfers a GMP moiety from GTP to Mo-molybdopterin (Mo-MPT) cofactor (Moco or molybdenum cofactor) to form Mo-molybdopterin guanine dinucleotide (Mo-MGD) cofactor. The polypeptide is Molybdenum cofactor guanylyltransferase (Yersinia pestis bv. Antiqua (strain Antiqua)).